We begin with the raw amino-acid sequence, 192 residues long: Fe/S biogenesis protein NfuA (192 aa).

The [4Fe-4S] cluster site is built by cysteine 149 and cysteine 152.

The protein belongs to the NfuA family. Homodimer. It depends on [4Fe-4S] cluster as a cofactor.

Involved in iron-sulfur cluster biogenesis. Binds a 4Fe-4S cluster, can transfer this cluster to apoproteins, and thereby intervenes in the maturation of Fe/S proteins. Could also act as a scaffold/chaperone for damaged Fe/S proteins. The sequence is that of Fe/S biogenesis protein NfuA from Shewanella sp. (strain ANA-3).